Reading from the N-terminus, the 312-residue chain is Porphobilinogen deaminase (312 aa).

At Cys241 the chain carries S-(dipyrrolylmethanemethyl)cysteine.

The protein belongs to the HMBS family. Monomer. Dipyrromethane serves as cofactor.

The catalysed reaction is 4 porphobilinogen + H2O = hydroxymethylbilane + 4 NH4(+). The protein operates within porphyrin-containing compound metabolism; protoporphyrin-IX biosynthesis; coproporphyrinogen-III from 5-aminolevulinate: step 2/4. Its pathway is porphyrin-containing compound metabolism; chlorophyll biosynthesis. Its function is as follows. Tetrapolymerization of the monopyrrole PBG into the hydroxymethylbilane pre-uroporphyrinogen in several discrete steps. This chain is Porphobilinogen deaminase, found in Chlorobaculum tepidum (strain ATCC 49652 / DSM 12025 / NBRC 103806 / TLS) (Chlorobium tepidum).